We begin with the raw amino-acid sequence, 300 residues long: 4-hydroxy-tetrahydrodipicolinate synthase (300 aa).

Pyruvate is bound at residue Thr49. Tyr137 serves as the catalytic Proton donor/acceptor. The Schiff-base intermediate with substrate role is filled by Lys166. Ile208 is a binding site for pyruvate.

Belongs to the DapA family. As to quaternary structure, homotetramer; dimer of dimers.

It localises to the cytoplasm. The catalysed reaction is L-aspartate 4-semialdehyde + pyruvate = (2S,4S)-4-hydroxy-2,3,4,5-tetrahydrodipicolinate + H2O + H(+). The protein operates within amino-acid biosynthesis; L-lysine biosynthesis via DAP pathway; (S)-tetrahydrodipicolinate from L-aspartate: step 3/4. Catalyzes the condensation of (S)-aspartate-beta-semialdehyde [(S)-ASA] and pyruvate to 4-hydroxy-tetrahydrodipicolinate (HTPA). In Methanopyrus kandleri (strain AV19 / DSM 6324 / JCM 9639 / NBRC 100938), this protein is 4-hydroxy-tetrahydrodipicolinate synthase.